The primary structure comprises 309 residues: L-aminoadipate-semialdehyde dehydrogenase-phosphopantetheinyl transferase (309 aa).

CoA contacts are provided by residues Arg-47, Arg-86–Lys-91, and Asn-108–His-111. The Mg(2+) site is built by Asp-129 and Glu-181. Glu-181–Lys-185 lines the CoA pocket.

The protein belongs to the P-Pant transferase superfamily. AcpS family. As to quaternary structure, monomer. Mg(2+) serves as cofactor.

The protein localises to the cytoplasm. It localises to the cytosol. The enzyme catalyses apo-[ACP] + CoA = holo-[ACP] + adenosine 3',5'-bisphosphate + H(+). The catalysed reaction is apo-[ACP] + acetyl-CoA = acetyl-[ACP] + adenosine 3',5'-bisphosphate + H(+). Its function is as follows. Catalyzes the post-translational modification of target proteins by phosphopantetheine. Can transfer the 4'-phosphopantetheine moiety from coenzyme A, regardless of whether the CoA is presented in the free thiol form or as an acetyl thioester, to a serine residue of a broad range of acceptors including the acyl carrier domain of FASN. In Mus musculus (Mouse), this protein is L-aminoadipate-semialdehyde dehydrogenase-phosphopantetheinyl transferase (Aasdhppt).